A 41-amino-acid chain; its full sequence is Alpha-conotoxin CIB (41 aa).

Positions 1–21 are excised as a propeptide; sequence SDGRNEAANDEASDVIELALK. Cystine bridges form between Cys23-Cys29 and Cys24-Cys37. The tract at residues 25–27 is ser-Xaa-Pro motif, crucial for potent interaction with nAChR; sequence SNP. Cys37 is subject to Cysteine amide.

The protein belongs to the conotoxin A superfamily. Expressed by the venom duct.

The protein localises to the secreted. Its function is as follows. Alpha-conotoxins act on postsynaptic membranes, they bind to the nicotinic acetylcholine receptors (nAChR) and thus inhibit them. This toxin blocks rat neuronal nAChR alpha-3-beta-2/CHRNA3-CHRNB2 (IC(50)=128.9 nM) and alpha-7/CHRNA7 (IC(50)=1511 nM). In vivo, intramuscular injection into zebrafish does not produce any effect on the locomotion of zebrafish. The protein is Alpha-conotoxin CIB of Conus catus (Cat cone).